The sequence spans 108 residues: Nucleoid-associated protein PLES_37951 (108 aa).

Disordered regions lie at residues 1–25 (MMKG…KMQE) and 87–108 (NQEK…KMPF). Over residues 87-98 (NQEKMSGFTSGM) the composition is skewed to polar residues.

This sequence belongs to the YbaB/EbfC family. Homodimer.

Its subcellular location is the cytoplasm. The protein resides in the nucleoid. Binds to DNA and alters its conformation. May be involved in regulation of gene expression, nucleoid organization and DNA protection. This chain is Nucleoid-associated protein PLES_37951, found in Pseudomonas aeruginosa (strain LESB58).